Here is a 719-residue protein sequence, read N- to C-terminus: Pesticidal crystal protein Cry1Ic (719 aa).

It belongs to the delta endotoxin family.

Its function is as follows. Promotes colloidosmotic lysis by binding to the midgut epithelial cells of insects. The sequence is that of Pesticidal crystal protein Cry1Ic (cry1Ic) from Bacillus thuringiensis.